The following is a 575-amino-acid chain: MTSKKLVNSVAGCADDALAGLVACNPNLQLLQGHRVALRSDLDSLKGRVALLSGGGSGHEPAHAGFIGKGMLTGVIAGAVFTSPAVGSILAAIRAVAQAGTVGTLLIVKNYTGDRLNFGLAREQARAEGIPVEMVVIGDDSAFTVLKKAGRRGLCGTVLIHKVAGALAEAGVGLEEIAKQVNVVAKAMGTLGVSLSSCSVPGSKPTFELSADEVELGLGIHGEAGVRRIKMATADEIVKLMLDHMTNTTNASHVPVQPGSSVVMMVNNLGGLSFLELGIIADATVRSLEGRGVKIARALVGTFMSALEMPGISLTLLLVDEPLLKLIDAETTAAAWPNVAAVSITGRKRSRVAPAEPQEAPDSTAAGGSASKRMALVLERVCSTLLGLEEHLNALDRAAGDGDCGTTHSRAARAIQEWLKEGPPPASPAQLLSKLSVLLLEKMGGSSGALYGLFLTAAAQPLKAKTSLPAWSAAMDAGLEAMQKYGKAAPGDRTMLDSLWAAGQELQAWKSPGADLLQVLTKAVKSAEAAAEATKNMEAGAGRASYISSARLEQPDPGAVAAAAILRAILEVLQS.

Residues 9-336 (SVAGCADDAL…IDAETTAAAW (328 aa)) enclose the DhaK domain. Residues 56–59 (GSGH), Lys-109, and Asp-114 contribute to the dihydroxyacetone site. His-221 (tele-hemiaminal-histidine intermediate) is an active-site residue. The interval 348-367 (KRSRVAPAEPQEAPDSTAAG) is disordered. At Ser-350 the chain carries Phosphoserine. One can recognise a DhaL domain in the interval 372–571 (KRMALVLERV…AAAILRAILE (200 aa)). Residues 401 to 404 (DGDC), 446 to 447 (SS), Gly-486, and 494 to 495 (TM) contribute to the ATP site. Phosphoserine occurs at positions 511 and 545. An ATP-binding site is contributed by 556–558 (DPG).

The protein belongs to the dihydroxyacetone kinase (DAK) family. Homodimer. Interacts with IFIH1 (via the CARD domains), the interaction is inhibited by viral infection. Mg(2+) is required as a cofactor. It depends on Mn(2+) as a cofactor. Requires Co(2+) as cofactor. Detected in erythrocytes (at protein level).

The enzyme catalyses dihydroxyacetone + ATP = dihydroxyacetone phosphate + ADP + H(+). It carries out the reaction D-glyceraldehyde + ATP = D-glyceraldehyde 3-phosphate + ADP + H(+). It catalyses the reaction FAD = riboflavin cyclic-4',5'-phosphate + AMP + H(+). Each activity is inhibited by the substrate(s) of the other. Its function is as follows. Catalyzes both the phosphorylation of dihydroxyacetone and of glyceraldehyde, and the splitting of ribonucleoside diphosphate-X compounds among which FAD is the best substrate. Represses IFIH1-mediated cellular antiviral response. In Homo sapiens (Human), this protein is Triokinase/FMN cyclase.